The primary structure comprises 1067 residues: Probable importin-5 homolog (1067 aa).

24 HEAT repeats span residues 3–34 (LQPI…YKNH), 42–75 (SFIV…SGNI), 93–120 (FAVR…QLVP), 125–152 (PEIL…LIGA), 164–197 (APHF…STFI), 206–243 (VFKP…IAQY), 251–286 (NFDM…FAEF), 295–347 (LYLE…HCVS), 349–381 (GLWE…SSIS), 385–425 (EKQI…ASYL), 427–466 (REMQ…LDEI), 468–508 (PNRV…VDGI), 510–553 (EEFT…GLAV), 555–596 (KKVF…AQCL), 598–658 (EDFI…AMEL), 661–703 (HLFP…SKQH), 718–757 (FTSR…MDIG), 763–826 (ADRI…CIQF), 832–869 (PYIA…ENGG), 876–909 (YPHI…AAEN), 917–960 (FLME…ITNL), 969–999 (PQTI…TLIR), 1008–1040 (QQYI…LALR), and 1041–1064 (SQES…LANF).

The protein belongs to the importin beta family. Importin beta-3 subfamily.

It localises to the cytoplasm. Its subcellular location is the nucleus. In terms of biological role, functions in nuclear protein import as nuclear transport receptor. Serves as receptor for nuclear localization signals (NLS) in cargo substrates. The protein is Probable importin-5 homolog of Dictyostelium discoideum (Social amoeba).